The chain runs to 547 residues: Glucose-6-phosphate isomerase (547 aa).

E353 functions as the Proton donor in the catalytic mechanism. Catalysis depends on residues H384 and K512.

Belongs to the GPI family.

It localises to the cytoplasm. The catalysed reaction is alpha-D-glucose 6-phosphate = beta-D-fructose 6-phosphate. Its pathway is carbohydrate biosynthesis; gluconeogenesis. It participates in carbohydrate degradation; glycolysis; D-glyceraldehyde 3-phosphate and glycerone phosphate from D-glucose: step 2/4. Catalyzes the reversible isomerization of glucose-6-phosphate to fructose-6-phosphate. This is Glucose-6-phosphate isomerase from Glaesserella parasuis serovar 5 (strain SH0165) (Haemophilus parasuis).